The chain runs to 794 residues: Zinc finger Y-chromosomal protein 1 (794 aa).

The Nuclear localization signal signature appears at 380-389; sequence TKQKLKKKRR. 13 consecutive C2H2-type zinc fingers follow at residues 411 to 433, 442 to 464, 477 to 499, 508 to 531, 537 to 559, 565 to 588, 594 to 616, 622 to 645, 651 to 673, 679 to 702, 708 to 730, 736 to 759, and 765 to 788; these read YPCM…MKNH, YRCT…LESH, LECE…KLTH, HICK…LAVH, HICV…MRTH, YLCQ…KTKH, FKCD…AILH, HQCL…ISVH, HKCE…EAAH, HQCR…LSVH, YRCK…MKTH, YQCE…ISIH, and HRCD…LKHH.

It belongs to the krueppel C2H2-type zinc-finger protein family. ZFX/ZFY subfamily.

The protein resides in the nucleus. In terms of biological role, probable transcriptional activator. This chain is Zinc finger Y-chromosomal protein 1 (zfy1), found in Xenopus laevis (African clawed frog).